We begin with the raw amino-acid sequence, 187 residues long: Protein GrpE (187 aa).

The segment at 1-22 (MADEQNLDAQAQDQAAEAGAGD) is disordered. A compositionally biased stretch (low complexity) spans 7–22 (LDAQAQDQAAEAGAGD).

Belongs to the GrpE family. In terms of assembly, homodimer.

The protein localises to the cytoplasm. In terms of biological role, participates actively in the response to hyperosmotic and heat shock by preventing the aggregation of stress-denatured proteins, in association with DnaK and GrpE. It is the nucleotide exchange factor for DnaK and may function as a thermosensor. Unfolded proteins bind initially to DnaJ; upon interaction with the DnaJ-bound protein, DnaK hydrolyzes its bound ATP, resulting in the formation of a stable complex. GrpE releases ADP from DnaK; ATP binding to DnaK triggers the release of the substrate protein, thus completing the reaction cycle. Several rounds of ATP-dependent interactions between DnaJ, DnaK and GrpE are required for fully efficient folding. The protein is Protein GrpE of Pseudomonas syringae pv. tomato (strain ATCC BAA-871 / DC3000).